Consider the following 350-residue polypeptide: Probable deoxyhypusine synthase (350 aa).

NAD(+) is bound by residues 96 to 100, 122 to 124, E128, and D229; these read SNLIS and TAG. 127–128 serves as a coordination point for spermidine; that stretch reads EE. Residue D234 participates in spermidine binding. G276 provides a ligand contact to NAD(+). H281 contributes to the spermidine binding site. Residue 301 to 302 coordinates NAD(+); sequence SA. Spermidine is bound by residues 307–309 and 316–322; these read GSD and EAVSWGK. K322 acts as the Nucleophile in catalysis. 335–336 provides a ligand contact to NAD(+); it reads EV.

It belongs to the deoxyhypusine synthase family. NAD(+) serves as cofactor.

The catalysed reaction is [eIF5A protein]-L-lysine + spermidine = [eIF5A protein]-deoxyhypusine + propane-1,3-diamine. The protein operates within protein modification; eIF5A hypusination. Catalyzes the NAD-dependent oxidative cleavage of spermidine and the subsequent transfer of the butylamine moiety of spermidine to the epsilon-amino group of a specific lysine residue of the eIF-5A precursor protein to form the intermediate deoxyhypusine residue. The chain is Probable deoxyhypusine synthase from Schizosaccharomyces pombe (strain 972 / ATCC 24843) (Fission yeast).